We begin with the raw amino-acid sequence, 728 residues long: E3 ubiquitin-protein ligase TRIM36 (728 aa).

An RING-type; degenerate zinc finger spans residues 33 to 84 (CPACKELFTHPLILPCQHSICHKCVKELLLTLDDSFNDVGSDNSNQSSPRLR). 2 consecutive B box-type zinc fingers follow at residues 154 to 192 (AIMC…WGTI) and 207 to 249 (PKIL…VTTM). Zn(2+) contacts are provided by C212, H215, C235, and H241. Residues 271-345 (ESQVKSQISE…MEEYQGLLEN (75 aa)) adopt a coiled-coil conformation. Residues 356-413 (LKETDQSCFVQTAKQLHLRIQKATESLKSFRPAAQTSFEDYVVNTSKQTELLGELSFF) enclose the COS domain. The region spanning 419–510 (VPEINEEQSK…RELILHTPPA (92 aa)) is the Fibronectin type-III domain. One can recognise a B30.2/SPRY domain in the interval 508-720 (PPAPVFSFLF…IQLEEPITAK (213 aa)).

It belongs to the TRIM/RBCC family. As to quaternary structure, interacts with CENPH. As to expression, highly expressed in testis, prostate and brain. Weakly expressed in kidney, lung and heart. Expressed in fetal tissues.

The protein localises to the cytoplasm. Its subcellular location is the cytoplasmic vesicle. It localises to the secretory vesicle. It is found in the acrosome. The protein resides in the cytoskeleton. It carries out the reaction S-ubiquitinyl-[E2 ubiquitin-conjugating enzyme]-L-cysteine + [acceptor protein]-L-lysine = [E2 ubiquitin-conjugating enzyme]-L-cysteine + N(6)-ubiquitinyl-[acceptor protein]-L-lysine.. In terms of biological role, E3 ubiquitin-protein ligase which mediates ubiquitination and subsequent proteasomal degradation of target proteins. Involved in chromosome segregation and cell cycle regulation. May play a role in the acrosome reaction and fertilization. In Homo sapiens (Human), this protein is E3 ubiquitin-protein ligase TRIM36 (TRIM36).